The chain runs to 203 residues: V-type ATP synthase subunit D (203 aa).

It belongs to the V-ATPase D subunit family.

Its function is as follows. Produces ATP from ADP in the presence of a proton gradient across the membrane. This Thermotoga neapolitana (strain ATCC 49049 / DSM 4359 / NBRC 107923 / NS-E) protein is V-type ATP synthase subunit D.